The chain runs to 482 residues: Malvidin galactosylase UGT88C3 (482 aa).

Histidine 16 serves as the catalytic Proton acceptor. The active-site Charge relay is the aspartate 117. Residues serine 279, tryptophan 345, alanine 349, histidine 366, asparagine 370, serine 371, and glutamate 374 each coordinate UDP.

The protein belongs to the UDP-glycosyltransferase family.

Its subcellular location is the endoplasmic reticulum. It is found in the nucleus. It catalyses the reaction malvidin + UDP-alpha-D-galactose = malvidin 3-O-beta-D-galactoside + UDP + H(+). The protein operates within pigment biosynthesis; anthocyanin biosynthesis. Its function is as follows. UDP-glycosyltransferase which uses UDP-galactose and malvidin as substrates to catalyze the biosynthesis of malvidin 3-O-galactoside, an anthocyanin conferring purple pigmentation. The protein is Malvidin galactosylase UGT88C3 of Oryza sativa subsp. indica (Rice).